The following is a 411-amino-acid chain: Lissencephaly-1 homolog (411 aa).

In terms of domain architecture, LisH spans 9–41; the sequence is QREELNQAIADYLGTNGYADSLEAFRKEADLST. Residues 56–83 adopt a coiled-coil conformation; sequence TSVIRLQKKVMELEAKLTEAEKEVIEGA. WD repeat units follow at residues 106–147, 148–187, 191–230, 233–272, 275–334, 337–376, and 379–411; these read GHRA…RTLK, GHTDSVQDVAFDAQGKLLVSCSADLSIKLWDFQQSYECVK, GHDHNVSSVAFVPAGDYVLSASRDRTIKMWEVATGYCVKT, GHREWVRMVRVHIEGSIFATCSNDHTIRVWLTNSKDCKVE, DHEH…CLLT, GHDNWVRGLAFHPGGKYLVSASDDKTIRVWDLRNKRCMKT, and AHQHFCTSIDFHKAHPYVISGSVDQTVKVWECR.

This sequence belongs to the WD repeat LIS1/nudF family.

The protein resides in the cytoplasm. It is found in the cytoskeleton. The protein localises to the microtubule organizing center. Its subcellular location is the centrosome. Its function is as follows. Positively regulates the activity of the minus-end directed microtubule motor protein dynein. May enhance dynein-mediated microtubule sliding by targeting dynein to the microtubule plus end. Required for several dynein- and microtubule-dependent processes. The sequence is that of Lissencephaly-1 homolog from Drosophila grimshawi (Hawaiian fruit fly).